Consider the following 90-residue polypeptide: PqqA binding protein 2 (90 aa).

This sequence belongs to the PqqD family. As to quaternary structure, monomer. Interacts with PqqE.

It participates in cofactor biosynthesis; pyrroloquinoline quinone biosynthesis. Its function is as follows. Functions as a PqqA binding protein and presents PqqA to PqqE, in the pyrroloquinoline quinone (PQQ) biosynthetic pathway. The sequence is that of PqqA binding protein 2 (pqqD2) from Pseudomonas putida (strain ATCC 47054 / DSM 6125 / CFBP 8728 / NCIMB 11950 / KT2440).